The primary structure comprises 152 residues: Putative membrane protein insertion efficiency factor (152 aa).

The tract at residues 81–152 (AAGGYDPVPG…IVGSGRGPWV (72 aa)) is disordered.

It belongs to the UPF0161 family.

Its subcellular location is the cell membrane. Its function is as follows. Could be involved in insertion of integral membrane proteins into the membrane. In Frankia casuarinae (strain DSM 45818 / CECT 9043 / HFP020203 / CcI3), this protein is Putative membrane protein insertion efficiency factor.